The sequence spans 564 residues: Ovochymase-2 (564 aa).

The N-terminal stretch at 1 to 22 (MLISRNKLILLLGIVFFERGKS) is a signal peptide. Residues 23–51 (ATLSLPKAPSCGQSLVKVQPWNYFNIFSR) constitute a propeptide, activation peptide. The region spanning 52 to 299 (ILGGSQVEKG…VLPWIHEHIQ (248 aa)) is the Peptidase S1 domain. Residues Cys77 and Cys93 are joined by a disulfide bond. His92 functions as the Charge relay system in the catalytic mechanism. Asn104 is a glycosylation site (N-linked (GlcNAc...) asparagine). Glu119 contributes to the Ca(2+) binding site. Asp142 serves as the catalytic Charge relay system. Intrachain disulfides connect Cys176–Cys246, Cys207–Cys225, Cys236–Cys265, Cys311–Cys341, and Cys365–Cys384. Catalysis depends on Ser240, which acts as the Charge relay system. CUB domains follow at residues 311-421 (CSEQ…YKAL) and 431-543 (CSYL…VSFI). Asn415 and Asn451 each carry an N-linked (GlcNAc...) asparagine glycan. Cystine bridges form between Cys431–Cys458 and Cys485–Cys506. A glycan (N-linked (GlcNAc...) asparagine) is linked at Asn530.

This sequence belongs to the peptidase S1 family.

It localises to the secreted. Functionally, may be required for sperm ADAM3 processing and consequential sperm fertilizing ability. In vitro, has an endopeptidase activity. The polypeptide is Ovochymase-2 (Homo sapiens (Human)).